We begin with the raw amino-acid sequence, 340 residues long: MNPSSLVLNGLTSYFENGRARVVPPVGRNILGVVNYASVCEYPTLDHGYPELEINMVAPTAEPFAEVWVTDAESEHGERDGITYAHDGEYFFCAGRVPPTGRYTEATRAAYVTMFELLEEFGYSSVFRMWNFIGDINRDNAEGMEVYRDFCRGRAEAFEQCRLEFDQFPAATGIGSRGGGIAFYLLACRSGGHVHIENPRQVPAYHYPKRYGPRAPRFARATYLPSRAADGVGGQVFVSGTASVLGHETAHEGDLVKQCRLALENIELVISGGNLAAHGISAGHGLTALRNIKVYVRRSEDVPAVREICREAFSPDADIVYLTVDVCRSDLLVEIEGVVM.

Residues Tyr-147, Arg-154, Tyr-207, and Arg-220 each coordinate substrate. Glu-334 serves as the catalytic Proton acceptor.

This sequence belongs to the FkbO/Hyg5 family. As to quaternary structure, trimer.

It carries out the reaction chorismate = 3-hydroxybenzoate + pyruvate. In terms of biological role, involved in the biosynthesis of BC325, a rapamycin analog containing a 3-hydroxybenzoate starter unit. Catalyzes the hydrolysis of chorismate via an intramolecular mechanism to yield 3-hydroxybenzoate (3HBA). This Streptomyces hygroscopicus protein is 3-hydroxybenzoate synthase.